We begin with the raw amino-acid sequence, 267 residues long: Hydroxyethylthiazole kinase 2 (267 aa).

Residue M41 coordinates substrate. ATP contacts are provided by K116 and T166. G193 is a binding site for substrate.

Belongs to the Thz kinase family. It depends on Mg(2+) as a cofactor.

It carries out the reaction 5-(2-hydroxyethyl)-4-methylthiazole + ATP = 4-methyl-5-(2-phosphooxyethyl)-thiazole + ADP + H(+). Its pathway is cofactor biosynthesis; thiamine diphosphate biosynthesis; 4-methyl-5-(2-phosphoethyl)-thiazole from 5-(2-hydroxyethyl)-4-methylthiazole: step 1/1. Catalyzes the phosphorylation of the hydroxyl group of 4-methyl-5-beta-hydroxyethylthiazole (THZ). The protein is Hydroxyethylthiazole kinase 2 of Streptococcus pneumoniae serotype 4 (strain ATCC BAA-334 / TIGR4).